Here is a 131-residue protein sequence, read N- to C-terminus: Small ribosomal subunit protein uS11 (131 aa).

It belongs to the universal ribosomal protein uS11 family. In terms of assembly, part of the 30S ribosomal subunit. Interacts with proteins S7 and S18. Binds to IF-3.

Its function is as follows. Located on the platform of the 30S subunit, it bridges several disparate RNA helices of the 16S rRNA. Forms part of the Shine-Dalgarno cleft in the 70S ribosome. The sequence is that of Small ribosomal subunit protein uS11 from Saccharophagus degradans (strain 2-40 / ATCC 43961 / DSM 17024).